Here is a 211-residue protein sequence, read N- to C-terminus: Scoloptoxin SSD43 (211 aa).

The first 20 residues, 1–20 (MNFVIYGVIVVLTSQLYVDG), serve as a signal peptide directing secretion.

Post-translationally, contains 3 disulfide bonds. In terms of tissue distribution, expressed by the venom gland.

The protein resides in the secreted. Functionally, shows trypsin inhibiting activity. The protein is highly thermally stable, since its incubation in boiling water during 10 minutes does not reduce its activity. The chain is Scoloptoxin SSD43 from Scolopendra dehaani (Thai centipede).